We begin with the raw amino-acid sequence, 388 residues long: Chorismate synthase (388 aa).

NADP(+) is bound by residues arginine 39 and arginine 45. FMN-binding positions include 132-134, 251-252, glycine 296, 311-315, and arginine 337; these read RSS, NA, and KPIPT.

As to quaternary structure, homotetramer. The cofactor is FMNH2.

The catalysed reaction is 5-O-(1-carboxyvinyl)-3-phosphoshikimate = chorismate + phosphate. It functions in the pathway metabolic intermediate biosynthesis; chorismate biosynthesis; chorismate from D-erythrose 4-phosphate and phosphoenolpyruvate: step 7/7. In terms of biological role, catalyzes the anti-1,4-elimination of the C-3 phosphate and the C-6 proR hydrogen from 5-enolpyruvylshikimate-3-phosphate (EPSP) to yield chorismate, which is the branch point compound that serves as the starting substrate for the three terminal pathways of aromatic amino acid biosynthesis. This reaction introduces a second double bond into the aromatic ring system. This Staphylococcus aureus protein is Chorismate synthase.